We begin with the raw amino-acid sequence, 304 residues long: Acetylglutamate kinase (304 aa).

Residues 70–71, R92, and N185 contribute to the substrate site; that span reads GG.

Belongs to the acetylglutamate kinase family. ArgB subfamily.

It is found in the cytoplasm. It catalyses the reaction N-acetyl-L-glutamate + ATP = N-acetyl-L-glutamyl 5-phosphate + ADP. The protein operates within amino-acid biosynthesis; L-arginine biosynthesis; N(2)-acetyl-L-ornithine from L-glutamate: step 2/4. Catalyzes the ATP-dependent phosphorylation of N-acetyl-L-glutamate. This is Acetylglutamate kinase from Paracoccus denitrificans (strain Pd 1222).